Here is a 125-residue protein sequence, read N- to C-terminus: Multifunctional methyltransferase subunit TRM112-like protein (125 aa).

The 118-residue stretch at 2–119 folds into the TRM112 domain; sequence KLLTHNLLSS…SRGIPNMLLN (118 aa).

The protein belongs to the TRM112 family. Part of the heterodimeric BUD23-TRM112 methyltransferase complex; this heterodimerization is necessary for the metabolic stability and activity of the catalytic subunit BUD23. Part of the heterodimeric N6AMT1-TRM112 methyltransferase complex; this heterodimerization is necessary for S-adenosyl-L-methionine-binding to N6AMT1/HEMK2. Part of the heterodimeric ALKBH8-TRM112 methyltransferase complex. Part of the heterodimeric METTL5-TRM112 methyltransferase complex; this heterodimerization is necessary for the stability of the catalytic subunit METTL5. Part of the heterodimeric THUMPD3-TRM112 methyltransferase complex; this complex forms an active tRNA methyltransferase, where TRMT112 acts as an activator of the catalytic subunit THUMPD3. Part of the heterodimeric THUMPD2-TRM112 methyltransferase complex; this complex forms an active tRNA methyltransferase, where TRMT112 acts as an activator of the catalytic subunit THUMPD2. Part of the heterodimeric TRMT11-TRM112 methyltransferase complex; this complex forms an active tRNA methyltransferase, where TRMT112 acts as an activator of the catalytic subunit TRMT11. In terms of tissue distribution, abundantly expressed in the testis, also expressed in the brain, heart, kidney, liver, lung, muscle and spleen.

The protein resides in the nucleus. It localises to the nucleoplasm. It is found in the cytoplasm. Its subcellular location is the perinuclear region. Its function is as follows. Acts as an activator of both rRNA/tRNA and protein methyltransferases. Together with methyltransferase BUD23, methylates the N(7) position of a guanine in 18S rRNA. The heterodimer with HEMK2/N6AMT1 catalyzes N5-methylation of ETF1 on 'Gln-185', using S-adenosyl L-methionine as methyl donor. The heterodimer with ALKBH8 catalyzes the methylation of 5-carboxymethyl uridine to 5-methylcarboxymethyl uridine at the wobble position of the anticodon loop in target tRNA species. Together with methyltransferase THUMPD3, catalyzes the formation of N(2)-methylguanosine at position 6 in a broad range of tRNA substrates and at position 7 of tRNA(Trp). Involved in the pre-rRNA processing steps leading to small-subunit rRNA production. Together with methyltransferase METTL5, specifically methylates the 6th position of adenine in position 1832 of 18S rRNA. This chain is Multifunctional methyltransferase subunit TRM112-like protein (Trmt112), found in Mus musculus (Mouse).